Reading from the N-terminus, the 696-residue chain is UvrABC system protein B (696 aa).

The Helicase ATP-binding domain maps to E46–R433. Position 59–66 (G59–T66) interacts with ATP. Positions Y112–I135 match the Beta-hairpin motif. A Helicase C-terminal domain is found at Q450 to I616. Residues A647–R682 form the UVR domain.

The protein belongs to the UvrB family. Forms a heterotetramer with UvrA during the search for lesions. Interacts with UvrC in an incision complex.

The protein resides in the cytoplasm. Its function is as follows. The UvrABC repair system catalyzes the recognition and processing of DNA lesions. A damage recognition complex composed of 2 UvrA and 2 UvrB subunits scans DNA for abnormalities. Upon binding of the UvrA(2)B(2) complex to a putative damaged site, the DNA wraps around one UvrB monomer. DNA wrap is dependent on ATP binding by UvrB and probably causes local melting of the DNA helix, facilitating insertion of UvrB beta-hairpin between the DNA strands. Then UvrB probes one DNA strand for the presence of a lesion. If a lesion is found the UvrA subunits dissociate and the UvrB-DNA preincision complex is formed. This complex is subsequently bound by UvrC and the second UvrB is released. If no lesion is found, the DNA wraps around the other UvrB subunit that will check the other stand for damage. The polypeptide is UvrABC system protein B (Burkholderia mallei (strain ATCC 23344)).